The sequence spans 382 residues: Transcription termination/antitermination protein NusA (382 aa).

Positions 135–199 (EDIMTGIVQR…KGPQIMISRT (65 aa)) constitute an S1 motif domain. In terms of domain architecture, KH spans 301–367 (EKTTQVIVPD…TLALDQETAD (67 aa)). Residues 348-382 (LLEDEAASHETLALDQETADQPEATVETSKNHEEE) are disordered.

It belongs to the NusA family. As to quaternary structure, monomer. Binds directly to the core enzyme of the DNA-dependent RNA polymerase and to nascent RNA.

It is found in the cytoplasm. Its function is as follows. Participates in both transcription termination and antitermination. This is Transcription termination/antitermination protein NusA from Halalkalibacterium halodurans (strain ATCC BAA-125 / DSM 18197 / FERM 7344 / JCM 9153 / C-125) (Bacillus halodurans).